A 249-amino-acid chain; its full sequence is Phosphate import ATP-binding protein PstB 2 (249 aa).

The ABC transporter domain maps to 4 to 244; the sequence is IEVRDLDLFY…PKDKRTEDYI (241 aa). 36–43 lines the ATP pocket; sequence GPSGCGKS.

The protein belongs to the ABC transporter superfamily. Phosphate importer (TC 3.A.1.7) family. As to quaternary structure, the complex is composed of two ATP-binding proteins (PstB), two transmembrane proteins (PstC and PstA) and a solute-binding protein (PstS).

The protein localises to the cell membrane. It carries out the reaction phosphate(out) + ATP + H2O = ADP + 2 phosphate(in) + H(+). In terms of biological role, part of the ABC transporter complex PstSACB involved in phosphate import. Responsible for energy coupling to the transport system. The sequence is that of Phosphate import ATP-binding protein PstB 2 from Caldanaerobacter subterraneus subsp. tengcongensis (strain DSM 15242 / JCM 11007 / NBRC 100824 / MB4) (Thermoanaerobacter tengcongensis).